The primary structure comprises 100 residues: Integration host factor subunit alpha (100 aa).

Belongs to the bacterial histone-like protein family. As to quaternary structure, heterodimer of an alpha and a beta chain.

This protein is one of the two subunits of integration host factor, a specific DNA-binding protein that functions in genetic recombination as well as in transcriptional and translational control. This Phenylobacterium zucineum (strain HLK1) protein is Integration host factor subunit alpha.